We begin with the raw amino-acid sequence, 846 residues long: Translation initiation factor IF-2 (846 aa).

The segment at K199–K219 is disordered. Over residues S207–K219 the composition is skewed to basic residues. Residues S345–E512 enclose the tr-type G domain. The tract at residues G354–T361 is G1. G354 to T361 is a GTP binding site. The interval G379–H383 is G2. The interval D400–G403 is G3. GTP is bound by residues D400 to H404 and N454 to D457. Residues N454–D457 form a G4 region. The segment at S490–K492 is G5.

The protein belongs to the TRAFAC class translation factor GTPase superfamily. Classic translation factor GTPase family. IF-2 subfamily.

It is found in the cytoplasm. Its function is as follows. One of the essential components for the initiation of protein synthesis. Protects formylmethionyl-tRNA from spontaneous hydrolysis and promotes its binding to the 30S ribosomal subunits. Also involved in the hydrolysis of GTP during the formation of the 70S ribosomal complex. The protein is Translation initiation factor IF-2 of Francisella tularensis subsp. holarctica (strain LVS).